The primary structure comprises 213 residues: Sclerostin (213 aa).

The first 23 residues, 1-23 (MQLPLALCLVCLLVHTAFRVVEG), serve as a signal peptide directing secretion. The interval 41-71 (GEYPEPPPELENNKTMNRAENGGRPPHHPFE) is disordered. N53 carries N-linked (GlcNAc...) asparagine glycosylation. Disulfide bonds link C80-C134, C94-C148, C105-C165, and C109-C167. The region spanning 82–172 (ELHFTRYVTD…ASCKCKRLTR (91 aa)) is the CTCK domain. N175 carries N-linked (GlcNAc...) asparagine glycosylation. A disordered region spans residues 178–213 (ELKDFGTEAARPQKGRKPRPRARSAKANQAELENAY). Residues 190–201 (QKGRKPRPRARS) are compositionally biased toward basic residues.

The protein belongs to the sclerostin family. As to quaternary structure, interacts with LRP4 (via the extracellular domain); the interaction facilitates the inhibition of Wnt signaling. Interacts with LRP5 (via the first two YWTD-EGF repeat domains); the interaction inhibits Wnt-mediated signaling. Interacts with LRP6. In terms of tissue distribution, widely expressed at low levels with highest levels in bone, cartilage, kidney, liver, bone marrow and primary osteoblasts differentiated for 21 days. Detected in the subendothelial layer of the aortic intima (at protein level).

The protein resides in the secreted. It is found in the extracellular space. It localises to the extracellular matrix. Its function is as follows. Negative regulator of bone growth that acts through inhibition of Wnt signaling and bone formation. This chain is Sclerostin, found in Homo sapiens (Human).